The chain runs to 504 residues: Glycerol kinase (504 aa).

Threonine 12 provides a ligand contact to ADP. Positions 12, 13, and 14 each coordinate ATP. Threonine 12 provides a ligand contact to sn-glycerol 3-phosphate. Arginine 16 contacts ADP. Sn-glycerol 3-phosphate-binding residues include arginine 82, glutamate 83, tyrosine 134, and aspartate 246. Positions 82, 83, 134, 246, and 247 each coordinate glycerol. Residues threonine 268 and glycine 312 each coordinate ADP. Residues threonine 268, glycine 312, glutamine 316, and glycine 413 each contribute to the ATP site. 2 residues coordinate ADP: glycine 413 and asparagine 417.

It belongs to the FGGY kinase family.

The catalysed reaction is glycerol + ATP = sn-glycerol 3-phosphate + ADP + H(+). The protein operates within polyol metabolism; glycerol degradation via glycerol kinase pathway; sn-glycerol 3-phosphate from glycerol: step 1/1. Its activity is regulated as follows. Inhibited by fructose 1,6-bisphosphate (FBP). Key enzyme in the regulation of glycerol uptake and metabolism. Catalyzes the phosphorylation of glycerol to yield sn-glycerol 3-phosphate. The protein is Glycerol kinase of Pseudarthrobacter chlorophenolicus (strain ATCC 700700 / DSM 12829 / CIP 107037 / JCM 12360 / KCTC 9906 / NCIMB 13794 / A6) (Arthrobacter chlorophenolicus).